The primary structure comprises 45 residues: Mu-conotoxin-like Cal 12.1.2e (45 aa).

Cystine bridges form between cysteine 3–cysteine 16, cysteine 11–cysteine 28, cysteine 18–cysteine 33, and cysteine 27–cysteine 39. Tryptophan 17 bears the 6'-bromotryptophan mark. Proline 23 carries the 4-hydroxyproline modification. 6'-bromotryptophan is present on tryptophan 38. Proline 40 carries the post-translational modification 4-hydroxyproline.

As to expression, expressed by the venom duct.

The protein localises to the secreted. Its function is as follows. Mu-conotoxins block voltage-gated sodium channels. This toxin reversibly blocks voltage-gated sodium channel in cephalopods, with no alteration in the voltage dependence of sodium conductance or on the kinetics of inactivation. This is Mu-conotoxin-like Cal 12.1.2e from Californiconus californicus (California cone).